A 313-amino-acid polypeptide reads, in one-letter code: Ester hydrolase C11orf54 homolog (313 aa).

H264, H266, and H276 together coordinate Zn(2+).

As to quaternary structure, monomer. Zn(2+) is required as a cofactor.

Its subcellular location is the nucleus. The protein resides in the cytoplasm. In terms of biological role, exhibits ester hydrolase activity on the substrate p-nitrophenyl acetate, in vitro. May regulate DNA damage and repair by regulating HIF1A degradation via chaperone-mediated autophagy (CMA). The sequence is that of Ester hydrolase C11orf54 homolog from Xenopus tropicalis (Western clawed frog).